The sequence spans 398 residues: MDTQAFRRSLHHSDRYNRRGFDSPTKRAQALEEAYQSDLITSIRNNSFTYKKGRLNIKLAQAFGFCWGVERAVAMAYETRRHYPDENIWITNEIIHNPSVNDHLRKMNVKFISAKNGIKDFSLVSDGDVVILPAFGATVQEMKLLHEKGCHIIDTTCPWVSKVWHTVEKHKKHTFTSIIHGKFKHEETLATSSFADKYLVVLNLEEANYVSEYILGRGNKNHFLNKFAQAFSNGFDPDKDLDRVGVANQTTMLKSETEEIGKVFEKTMLHKFGPEKLNSHFLAFNTICDATEERQDAMFSLVDEDLDILVVIGGYNSSNTTHLQEIAINKNISSFHIDTPERISVKENSILHKPLKSEMVLKKNFIPDGEIKVGITSGASTPDKIVADVIEKLIAITK.

Residue C66 coordinates [4Fe-4S] cluster. (2E)-4-hydroxy-3-methylbut-2-enyl diphosphate is bound at residue H96. Dimethylallyl diphosphate is bound at residue H96. H96 is an isopentenyl diphosphate binding site. C157 lines the [4Fe-4S] cluster pocket. H185 contacts (2E)-4-hydroxy-3-methylbut-2-enyl diphosphate. Residue H185 coordinates dimethylallyl diphosphate. H185 contributes to the isopentenyl diphosphate binding site. E187 functions as the Proton donor in the catalytic mechanism. T250 contacts (2E)-4-hydroxy-3-methylbut-2-enyl diphosphate. Position 288 (C288) interacts with [4Fe-4S] cluster. 4 residues coordinate (2E)-4-hydroxy-3-methylbut-2-enyl diphosphate: S317, S318, N319, and S380. S317, S318, N319, and S380 together coordinate dimethylallyl diphosphate. Residues S317, S318, N319, and S380 each contribute to the isopentenyl diphosphate site.

This sequence belongs to the IspH family. The cofactor is [4Fe-4S] cluster.

The catalysed reaction is isopentenyl diphosphate + 2 oxidized [2Fe-2S]-[ferredoxin] + H2O = (2E)-4-hydroxy-3-methylbut-2-enyl diphosphate + 2 reduced [2Fe-2S]-[ferredoxin] + 2 H(+). It catalyses the reaction dimethylallyl diphosphate + 2 oxidized [2Fe-2S]-[ferredoxin] + H2O = (2E)-4-hydroxy-3-methylbut-2-enyl diphosphate + 2 reduced [2Fe-2S]-[ferredoxin] + 2 H(+). It functions in the pathway isoprenoid biosynthesis; dimethylallyl diphosphate biosynthesis; dimethylallyl diphosphate from (2E)-4-hydroxy-3-methylbutenyl diphosphate: step 1/1. The protein operates within isoprenoid biosynthesis; isopentenyl diphosphate biosynthesis via DXP pathway; isopentenyl diphosphate from 1-deoxy-D-xylulose 5-phosphate: step 6/6. Catalyzes the conversion of 1-hydroxy-2-methyl-2-(E)-butenyl 4-diphosphate (HMBPP) into a mixture of isopentenyl diphosphate (IPP) and dimethylallyl diphosphate (DMAPP). Acts in the terminal step of the DOXP/MEP pathway for isoprenoid precursor biosynthesis. This Prochlorococcus marinus subsp. pastoris (strain CCMP1986 / NIES-2087 / MED4) protein is 4-hydroxy-3-methylbut-2-enyl diphosphate reductase.